Here is a 339-residue protein sequence, read N- to C-terminus: Glycerol-3-phosphate dehydrogenase [NAD(P)+] (339 aa).

The NADPH site is built by Ser-15, Tyr-16, His-36, and Lys-110. Sn-glycerol 3-phosphate-binding residues include Lys-110, Gly-139, and Thr-141. An NADPH-binding site is contributed by Ala-143. Sn-glycerol 3-phosphate is bound by residues Lys-195, Asp-248, Ser-258, Arg-259, and Asn-260. Lys-195 acts as the Proton acceptor in catalysis. Arg-259 contributes to the NADPH binding site. Residues Val-283 and Glu-285 each coordinate NADPH.

Belongs to the NAD-dependent glycerol-3-phosphate dehydrogenase family.

The protein localises to the cytoplasm. The catalysed reaction is sn-glycerol 3-phosphate + NAD(+) = dihydroxyacetone phosphate + NADH + H(+). The enzyme catalyses sn-glycerol 3-phosphate + NADP(+) = dihydroxyacetone phosphate + NADPH + H(+). The protein operates within membrane lipid metabolism; glycerophospholipid metabolism. In terms of biological role, catalyzes the reduction of the glycolytic intermediate dihydroxyacetone phosphate (DHAP) to sn-glycerol 3-phosphate (G3P), the key precursor for phospholipid synthesis. The polypeptide is Glycerol-3-phosphate dehydrogenase [NAD(P)+] (Enterobacter sp. (strain 638)).